A 212-amino-acid polypeptide reads, in one-letter code: Translation initiation factor IF-3 (212 aa).

Residues 190–203 (LVDKNSDSQDKSVS) show a composition bias toward basic and acidic residues. The disordered stretch occupies residues 190–212 (LVDKNSDSQDKSVSEEDTNEGEQ).

Belongs to the IF-3 family. Monomer.

The protein localises to the cytoplasm. In terms of biological role, IF-3 binds to the 30S ribosomal subunit and shifts the equilibrium between 70S ribosomes and their 50S and 30S subunits in favor of the free subunits, thus enhancing the availability of 30S subunits on which protein synthesis initiation begins. The sequence is that of Translation initiation factor IF-3 from Mycoplasmopsis fermentans (Mycoplasma fermentans).